The chain runs to 389 residues: Succinate--CoA ligase [ADP-forming] subunit beta (389 aa).

In terms of domain architecture, ATP-grasp spans 9-236 (RDMFEAHGVP…KDAADPLEAK (228 aa)). ATP-binding positions include Lys-45, 52–54 (GRG), Ala-94, and Glu-99. The Mg(2+) site is built by Asn-191 and Asp-205. Residues Asn-256 and 318-320 (GIT) contribute to the substrate site.

The protein belongs to the succinate/malate CoA ligase beta subunit family. Heterotetramer of two alpha and two beta subunits. The cofactor is Mg(2+).

It carries out the reaction succinate + ATP + CoA = succinyl-CoA + ADP + phosphate. The catalysed reaction is GTP + succinate + CoA = succinyl-CoA + GDP + phosphate. It functions in the pathway carbohydrate metabolism; tricarboxylic acid cycle; succinate from succinyl-CoA (ligase route): step 1/1. Functionally, succinyl-CoA synthetase functions in the citric acid cycle (TCA), coupling the hydrolysis of succinyl-CoA to the synthesis of either ATP or GTP and thus represents the only step of substrate-level phosphorylation in the TCA. The beta subunit provides nucleotide specificity of the enzyme and binds the substrate succinate, while the binding sites for coenzyme A and phosphate are found in the alpha subunit. The protein is Succinate--CoA ligase [ADP-forming] subunit beta of Pseudarthrobacter chlorophenolicus (strain ATCC 700700 / DSM 12829 / CIP 107037 / JCM 12360 / KCTC 9906 / NCIMB 13794 / A6) (Arthrobacter chlorophenolicus).